Reading from the N-terminus, the 707-residue chain is Serine/threonine protein kinase UL97 (707 aa).

Residues 1–14 (MSSALRSRARSASL) are compositionally biased toward low complexity. Disordered stretches follow at residues 1–33 (MSSA…SRAR), 113–146 (DGEK…GDGY), 176–198 (FTGG…RPLR), and 231–264 (ESQD…EADS). The segment covering 113-127 (DGEKEDAASDKENLR) has biased composition (basic and acidic residues). The segment covering 178–188 (GGSDPSDSVSG) has biased composition (low complexity). ATP is bound by residues 337–345 (LGQGSFGEV) and K359. The active-site Proton acceptor is D456.

It belongs to the protein kinase superfamily. Tyr protein kinase family. HCMV ganciclovir subfamily. As to quaternary structure, interacts with UL83. Post-translationally, autophosphorylates on serine and threonine residues.

The protein resides in the virion. The catalysed reaction is L-seryl-[protein] + ATP = O-phospho-L-seryl-[protein] + ADP + H(+). It catalyses the reaction L-threonyl-[protein] + ATP = O-phospho-L-threonyl-[protein] + ADP + H(+). Its function is as follows. Serine/threonine protein kinase that plays important roles in several processes including nuclear viral egress, viral replication or regulation of host cell cycle progression. Participates in the acquisition of tegument during virion morphogenesis in the nucleus. Phosphorylates the viral nuclear egress complex (NEC) subunits UL50 and UL53. Redistributes the host nuclear lamina by phosphorylating cellular Lamins-A/C. Plays a role in viral DNA synthesis by phosphorylating the DNA polymerase processivity factor UL44. Stimulates host cell cycle to support viral DNA synthesis by phosphorylating host retinoblastoma/RB1 protein. Additional substrates have been identified including host EF1D or H2B. Also phosphorylates host SAMHD1 and thereby counteracts its antiviral effect by reducing its dNTP hydrolase activity. The chain is Serine/threonine protein kinase UL97 (UL97) from Human cytomegalovirus (strain AD169) (HHV-5).